Consider the following 404-residue polypeptide: Cysteine desulfurase IscS (404 aa).

Residues 75-76 (AT), asparagine 155, glutamine 183, and 203-205 (SAH) each bind pyridoxal 5'-phosphate. Position 206 is an N6-(pyridoxal phosphate)lysine (lysine 206). Residue threonine 243 participates in pyridoxal 5'-phosphate binding. Cysteine 328 functions as the Cysteine persulfide intermediate in the catalytic mechanism. Cysteine 328 provides a ligand contact to [2Fe-2S] cluster.

It belongs to the class-V pyridoxal-phosphate-dependent aminotransferase family. NifS/IscS subfamily. Homodimer. Forms a heterotetramer with IscU, interacts with other sulfur acceptors. It depends on pyridoxal 5'-phosphate as a cofactor.

It is found in the cytoplasm. It catalyses the reaction (sulfur carrier)-H + L-cysteine = (sulfur carrier)-SH + L-alanine. The protein operates within cofactor biosynthesis; iron-sulfur cluster biosynthesis. Its function is as follows. Master enzyme that delivers sulfur to a number of partners involved in Fe-S cluster assembly, tRNA modification or cofactor biosynthesis. Catalyzes the removal of elemental sulfur atoms from cysteine to produce alanine. Functions as a sulfur delivery protein for Fe-S cluster synthesis onto IscU, an Fe-S scaffold assembly protein, as well as other S acceptor proteins. The sequence is that of Cysteine desulfurase IscS from Vibrio vulnificus (strain CMCP6).